The sequence spans 179 residues: Endoribonuclease YbeY (179 aa).

Residues His-148, His-152, and His-158 each coordinate Zn(2+).

This sequence belongs to the endoribonuclease YbeY family. Zn(2+) serves as cofactor.

Its subcellular location is the cytoplasm. In terms of biological role, single strand-specific metallo-endoribonuclease involved in late-stage 70S ribosome quality control and in maturation of the 3' terminus of the 16S rRNA. The polypeptide is Endoribonuclease YbeY (Prochlorococcus marinus (strain MIT 9215)).